The primary structure comprises 796 residues: Protein translocase subunit SecA 2 (796 aa).

ATP contacts are provided by residues glutamine 84, 102-106 (GEGKT), and aspartate 496.

Belongs to the SecA family. As to quaternary structure, monomer and homodimer. Part of the essential Sec protein translocation apparatus which comprises SecA, SecYEG and auxiliary proteins SecDF. Other proteins may also be involved.

Its subcellular location is the cell membrane. The protein localises to the cytoplasm. The enzyme catalyses ATP + H2O + cellular proteinSide 1 = ADP + phosphate + cellular proteinSide 2.. In terms of biological role, part of the Sec protein translocase complex. Interacts with the SecYEG preprotein conducting channel. Has a central role in coupling the hydrolysis of ATP to the transfer of proteins into and across the cell membrane, serving as an ATP-driven molecular motor driving the stepwise translocation of polypeptide chains across the membrane. This is Protein translocase subunit SecA 2 from Staphylococcus aureus (strain MSSA476).